The primary structure comprises 159 residues: Nascent polypeptide-associated complex subunit beta (159 aa).

Disordered stretches follow at residues M1–D39 and Q124–E159. Positions T23–H32 are enriched in basic residues. Residues G36–V101 form the NAC-A/B domain. The span at K136 to N153 shows a compositional bias: acidic residues.

This sequence belongs to the NAC-beta family. Part of the nascent polypeptide-associated complex (NAC), consisting of EGD2 and EGD1. NAC associates with ribosomes via EGD1.

The protein resides in the cytoplasm. Its subcellular location is the nucleus. Its function is as follows. Component of the nascent polypeptide-associated complex (NAC), a dynamic component of the ribosomal exit tunnel, protecting the emerging polypeptides from interaction with other cytoplasmic proteins to ensure appropriate nascent protein targeting. The NAC complex also promotes mitochondrial protein import by enhancing productive ribosome interactions with the outer mitochondrial membrane and blocks the inappropriate interaction of ribosomes translating non-secretory nascent polypeptides with translocation sites in the membrane of the endoplasmic reticulum. EGD1 may act as a transcription factor that exert a negative effect on the expression of several genes that are transcribed by RNA polymerase II. This chain is Nascent polypeptide-associated complex subunit beta (egd1), found in Sclerotinia sclerotiorum (strain ATCC 18683 / 1980 / Ss-1) (White mold).